We begin with the raw amino-acid sequence, 368 residues long: Terpene cyclase penA (368 aa).

6 helical membrane-spanning segments follow: residues 10–30 (IILA…NGFI), 81–101 (LSLY…ILLM), 118–138 (LTGL…LLAM), 192–212 (LFIA…GIAH), 233–253 (FALA…FLSI), and 334–354 (LATM…YWTA).

The protein belongs to the membrane-bound ascI terpene cyclase family.

The protein localises to the membrane. It functions in the pathway secondary metabolite biosynthesis. In terms of biological role, part of the gene cluster that mediates the biosynthesis of the indole diterpenes penitrems. The geranylgeranyl diphosphate (GGPP) synthase penG catalyzes the first step in penitrem biosynthesis via conversion of farnesyl pyrophosphate and isopentyl pyrophosphate into geranylgeranyl pyrophosphate (GGPP). Condensation of indole-3-glycerol phosphate with GGPP by the prenyl transferase penC then forms 3-geranylgeranylindole (3-GGI). Epoxidation by the FAD-dependent monooxygenase penM leads to a epoxidized-GGI that is substrate of the terpene cyclase penB for cyclization to yield paspaline. Paspaline is subsequently converted to 13-desoxypaxilline by the cytochrome P450 monooxygenase penP, the latter being then converted to paxilline by the cytochrome P450 monooxygenase penQ. Paxilline is converted to beta-paxitriol via C-10 ketoreduction by the short-chain dehydrogenase PC-15 which can be monoprenylated at the C-20 by the indole diterpene prenyltransferase penD. A two-step elimination (acetylation and elimination) process performed by the O-acetyltransferase PC-16 and the P.simplicissimum ptmI-ortholog not yet identified in P.crustosum, leads to the production of the prenylated form of penijanthine. The FAD-linked oxidoreductase ptmO then converts the prenylated form of penijanthine into PC-M5 which is in turn transformed into PC-M4 by the aromatic dimethylallyltransferase PC-22. A series of oxidation steps involving 4 cytochrome P450 monooxygenases (PC-21, PC-05, PC-23, PC-20) and a FAD-dependent monooxygenase (PC-14) are required for the transformation of PC-M4 to penitrems A and E. Synthesis of these final products is proposed to proceed via penitrems D and C (PC-21, PC-05, PC-14) and penitrems B and F (PC-21, PC-05, PC-14, PC-23). The chain is Terpene cyclase penA from Penicillium crustosum (Blue mold fungus).